A 387-amino-acid chain; its full sequence is MTGKLAEKLPVTMSSLLNQLPDNLYPEEIPSALNLFSGSSDSVVHYNQMATENVMDIGLTNEKPNPELSYSGSFQPAPGNKTVTYLGKFAFDSPSNWCQDNIISLMSAGILGVPPASGALSTQTSTASMVQPPQGDVEAMYPALPPYSNCGDLYSEPVSFHDPQGNPGLAYSPQDYQSAKPALDSNLFPMIPDYNLYHHPNDMGSIPEHKPFQGMDPIRVNPPPITPLETIKAFKDKQIHPGFGSLPQPPLTLKPIRPRKYPNRPSKTPLHERPHACPAEGCDRRFSRSDELTRHLRIHTGHKPFQCRICMRSFSRSDHLTTHIRTHTGEKPFACEFCGRKFARSDERKRHAKIHLKQKEKKAEKGGAPSASSAPPVSLAPVVTTCA.

A disordered region spans residues 241–283; it reads PGFGSLPQPPLTLKPIRPRKYPNRPSKTPLHERPHACPAEGCD. The segment covering 269–283 has biased composition (basic and acidic residues); the sequence is PLHERPHACPAEGCD. 3 consecutive C2H2-type zinc fingers follow at residues 275–299, 305–327, and 333–355; these read HACP…LRIH, FQCR…IRTH, and FACE…AKIH. Residues 348–387 form a disordered region; it reads RKRHAKIHLKQKEKKAEKGGAPSASSAPPVSLAPVVTTCA. Positions 350–360 are enriched in basic residues; that stretch reads RHAKIHLKQKE. Residues 368-387 show a composition bias toward low complexity; sequence APSASSAPPVSLAPVVTTCA.

Belongs to the EGR C2H2-type zinc-finger protein family.

It localises to the nucleus. Functionally, probable transcription factor involved in muscle spindle development. The sequence is that of Early growth response protein 3 (EGR3) from Homo sapiens (Human).